The sequence spans 153 residues: MKLRVLWVGKTQEEWVRRGIDEYAGRVRRYAPLEIGEARDEKGAAAEAMRARECERLDKLVPRTSRLILLDERGDQLTSPEFAAYISRCRDTAVPELAFAIGGAYGFADEFRRRADRVIALSRMTFTHQMVRVVLLEQIYRAFTIIGNEPYHH.

S-adenosyl-L-methionine contacts are provided by residues Leu-70, Gly-102, and Leu-121–Phe-126.

It belongs to the RNA methyltransferase RlmH family. In terms of assembly, homodimer.

It is found in the cytoplasm. It carries out the reaction pseudouridine(1915) in 23S rRNA + S-adenosyl-L-methionine = N(3)-methylpseudouridine(1915) in 23S rRNA + S-adenosyl-L-homocysteine + H(+). Its function is as follows. Specifically methylates the pseudouridine at position 1915 (m3Psi1915) in 23S rRNA. The polypeptide is Ribosomal RNA large subunit methyltransferase H (Geobacter sulfurreducens (strain ATCC 51573 / DSM 12127 / PCA)).